The following is a 170-amino-acid chain: Opacity-related protein POPM3 (170 aa).

The protein belongs to the opacity porin family.

It localises to the cell outer membrane. This Neisseria meningitidis serogroup C protein is Opacity-related protein POPM3 (opr).